The sequence spans 95 residues: UPF0235 protein Ssed_1229 (95 aa).

This sequence belongs to the UPF0235 family.

This is UPF0235 protein Ssed_1229 from Shewanella sediminis (strain HAW-EB3).